The sequence spans 271 residues: 3-methyl-2-oxobutanoate hydroxymethyltransferase (271 aa).

D53 and D92 together coordinate Mg(2+). Residues D53–S54, D92, and K120 each bind 3-methyl-2-oxobutanoate. E122 lines the Mg(2+) pocket. E189 (proton acceptor) is an active-site residue.

The protein belongs to the PanB family. As to quaternary structure, homodecamer; pentamer of dimers. Requires Mg(2+) as cofactor.

It localises to the cytoplasm. It catalyses the reaction 3-methyl-2-oxobutanoate + (6R)-5,10-methylene-5,6,7,8-tetrahydrofolate + H2O = 2-dehydropantoate + (6S)-5,6,7,8-tetrahydrofolate. The protein operates within cofactor biosynthesis; (R)-pantothenate biosynthesis; (R)-pantoate from 3-methyl-2-oxobutanoate: step 1/2. Catalyzes the reversible reaction in which hydroxymethyl group from 5,10-methylenetetrahydrofolate is transferred onto alpha-ketoisovalerate to form ketopantoate. The sequence is that of 3-methyl-2-oxobutanoate hydroxymethyltransferase from Burkholderia thailandensis (strain ATCC 700388 / DSM 13276 / CCUG 48851 / CIP 106301 / E264).